The primary structure comprises 1639 residues: Merozoite surface protein 1 (1639 aa).

Residues 1–19 (MKIIFFLCSFLFFIINTQC) form the signal peptide. Composition is skewed to polar residues over residues 58–67 (SGTAVTTSTP) and 107–119 (NSRR…NSSD). Disordered stretches follow at residues 58-78 (SGTA…SGGS) and 94-122 (VASG…DSDA). Residues Asn-116 and Asn-268 are each glycosylated (N-linked (GlcNAc...) asparagine). The tract at residues 689 to 764 (KKNIKTEGQS…VPTPPAPVNN (76 aa)) is disordered. 2 stretches are compositionally biased toward polar residues: residues 694–704 (TEGQSDNSEPS) and 711–722 (GQATTKPGQQAG). Low complexity predominate over residues 730–741 (VQAQAQEQKQAQ). Residues Asn-764, Asn-768, Asn-783, and Asn-844 are each glycosylated (N-linked (GlcNAc...) asparagine). Residues 893 to 915 (SMQPLSLTPQDKPEVSANDDTSH) form a disordered region. N-linked (GlcNAc...) asparagine glycosylation is found at Asn-920, Asn-964, Asn-1058, Asn-1165, and Asn-1174. A required for binding to host erythrocyte cell membrane region spans residues 1002–1116 (QLSFDLYNKY…EESIQTEDNY (115 aa)). Positions 1199-1212 (VSESGSDTLEQSQP) are enriched in polar residues. The segment at 1199 to 1229 (VSESGSDTLEQSQPKKPASTHVGAESNTITT) is disordered. Asn-1445 and Asn-1526 each carry an N-linked (GlcNAc...) asparagine glycan. 2 EGF-like domains span residues 1530–1570 (HQCV…VENP) and 1571–1618 (NPTC…IFCS). 6 disulfide bridges follow: Cys-1532–Cys-1543, Cys-1537–Cys-1553, Cys-1555–Cys-1566, Cys-1574–Cys-1587, Cys-1581–Cys-1601, and Cys-1603–Cys-1617. Residue Ser-1618 is the site of GPI-anchor amidated serine attachment. Positions 1619–1639 (SSNFLGISFLLILMLILYSFI) are cleaved as a propeptide — removed in mature form.

As to quaternary structure, forms a complex composed of subunits p83, p30, p38, and p42 which remain non-covalently associated; the complex is formed at the merozoite surface prior to egress from host erythrocytes. Forms a complex composed of processed MSP1 subunits, MSP6 subunit p36 and MSP7; the complex is formed at the merozoite surface prior to egress from host erythrocytes. Within the complex, interacts (via subunit p38) with MSP6 subunit p36 and (via subunits p83, p30 and p38) with MSP7 (via subunit p22). Forms a complex composed of MSP1, MSP6, DBLMSP1 and DBLMSP2. Within the complex, interacts (via subunit p38) with DBLMSP1 and DBLMSP2. Forms a complex composed of MSP1, and rhoptry proteins RhopH3, RAP1 and CLAG9/RhopH3. Within the complex, interacts (via subunits p42 and p19) with RhopH3 (via C-terminus). Forms a complex composed of MSP1, MSP6, MSP7, MSP9 and MSP3; within the complex, MSP6 and MSP9 mediate the binding to the host erythrocyte. Interacts (via subunits p19 and p42) with MSP9; the interaction is direct; MSP1 subunits p19 or p42, and MSP9 form a co-ligand complex that interacts with host SLC4A1/Band 3 protein. May interact with PFD6. Interacts with host spectrin. In terms of assembly, interacts with host glycophorin GYPA in a sialic acid-independent manner. Interacts with host proinflammatory cytokine S100P; the interaction blocks S100P inflammatory and chemotactic activities. As to quaternary structure, interacts with host SLC4A1/Band 3 (via 5ABC region) on the host erythrocyte surface in a sialic acid-independent manner. Post-translationally, the p190 precursor is cleaved by SUB1 prior to merozoite egress into 4 subunits p83, p30, p38, and p42 which remain non-covalently associated. SUB1-mediated proteolytic cleavage occurs in an orderly manner; the first cleavage occurs at the p83/p30 site, followed by cleavage at the p30/p38 site, the last cleavage occurs at the p38/p42 site. The order of cleavage is essential for parasite viability. SUB1-mediated processing is essential for merozoite egress. In a second processing step during erythrocyte invasion, p42 is cleaved by SUB2 into p33 and p19; the latter remains attached to the merozoite surface via its GPI-anchor and stays on the surface during the subsequent ring stage.

The protein localises to the cell membrane. Its subcellular location is the secreted. The protein resides in the vacuole membrane. In terms of biological role, during the asexual blood stage, involved in merozoite egress from host erythrocytes possibly via its interaction with the host cytoskeleton protein spectrin resulting in the destabilization of the host cytoskeleton and thus leading to erythrocyte cell membrane rupture. Involved in the binding to host erythrocytes and is required for host erythrocyte invasion. Its function is as follows. By binding to host proinflammatory cytokine S100P may interfere with host immune responses. Functionally, involved in merozoite invasion of host erythrocytes. May play a role in the biogenesis and/or function of the food vacuole during the intraerythrocytic development. The polypeptide is Merozoite surface protein 1 (Plasmodium falciparum (isolate Wellcome)).